We begin with the raw amino-acid sequence, 176 residues long: Cell division protein ZapC (176 aa).

It belongs to the ZapC family. As to quaternary structure, interacts directly with FtsZ.

Its subcellular location is the cytoplasm. Contributes to the efficiency of the cell division process by stabilizing the polymeric form of the cell division protein FtsZ. Acts by promoting interactions between FtsZ protofilaments and suppressing the GTPase activity of FtsZ. In Pseudoalteromonas translucida (strain TAC 125), this protein is Cell division protein ZapC.